Here is a 204-residue protein sequence, read N- to C-terminus: Somatotropin (204 aa).

Positions M1–S17 are cleaved as a signal peptide. Q18 is modified (pyrrolidone carboxylic acid). Zn(2+) is bound at residue H36. Residues C69 and C177 are joined by a disulfide bond. E186 lines the Zn(2+) pocket. Cysteines 194 and 202 form a disulfide.

Belongs to the somatotropin/prolactin family.

The protein localises to the secreted. Growth hormone plays an important role in growth control and is involved in the regulation of several anabolic processes. Implicated as an osmoregulatory substance important for seawater adaptation. In Odontesthes argentinensis (Marine silverside), this protein is Somatotropin (gh).